We begin with the raw amino-acid sequence, 595 residues long: MFS-type transporter phomT (595 aa).

Residues 1–11 are compositionally biased toward basic and acidic residues; it reads MESDGKSDRTK. Positions 1-62 are disordered; sequence MESDGKSDRT…HVSADDGPVD (62 aa). Positions 30-48 are enriched in polar residues; sequence PGHSTDTEGNGSDNNNTQV. N-linked (GlcNAc...) asparagine glycosylation is found at asparagine 39 and asparagine 44. 3 helical membrane passes run 91-111, 126-146, and 156-176; these read IILL…TIVA, DVGW…LFFG, and WVFL…GVAP. Residue asparagine 177 is glycosylated (N-linked (GlcNAc...) asparagine). 3 consecutive transmembrane segments (helical) span residues 186–206, 217–237, and 245–265; these read AVAG…IAFS, ALIS…GGVF, and WCFY…VFFL. Asparagine 277 is a glycosylation site (N-linked (GlcNAc...) asparagine). Helical transmembrane passes span 290-310, 320-340, 362-382, 409-429, 451-471, 483-503, and 559-579; these read IGTA…QWGG, VVAL…LQFW, VFTG…PIWF, IVGG…YALP, WIGY…QGIV, AIGT…FVSV, and VIWT…AVIF.

This sequence belongs to the major facilitator superfamily. TCR/Tet family.

It localises to the cell membrane. In terms of biological role, MFS-type transporter; part of the gene cluster that mediates the biosynthesis of the phomopsins, a group of hexapeptide mycotoxins which infects lupins and causes lupinosis disease in livestock. PhomT is likely to be involved in the cellular export of phomopsins. In Diaporthe leptostromiformis (Lupinosis disease fungus), this protein is MFS-type transporter phomT.